The following is a 248-amino-acid chain: Triosephosphate isomerase (248 aa).

9–11 (NWK) contacts substrate. The active-site Electrophile is histidine 93. Glutamate 163 functions as the Proton acceptor in the catalytic mechanism. Substrate contacts are provided by residues glycine 169, serine 208, and 229-230 (GG).

Belongs to the triosephosphate isomerase family. In terms of assembly, homodimer.

Its subcellular location is the cytoplasm. It catalyses the reaction D-glyceraldehyde 3-phosphate = dihydroxyacetone phosphate. It functions in the pathway carbohydrate biosynthesis; gluconeogenesis. The protein operates within carbohydrate degradation; glycolysis; D-glyceraldehyde 3-phosphate from glycerone phosphate: step 1/1. In terms of biological role, involved in the gluconeogenesis. Catalyzes stereospecifically the conversion of dihydroxyacetone phosphate (DHAP) to D-glyceraldehyde-3-phosphate (G3P). The sequence is that of Triosephosphate isomerase from Jannaschia sp. (strain CCS1).